Reading from the N-terminus, the 512-residue chain is Spastin homolog (512 aa).

The Cytoplasmic segment spans residues 1–274; that stretch reads MFAFSKGPAG…FKGLRQPVKG (274 aa). A coiled-coil region spans residues 32 to 97; the sequence is IEMDELTKHA…MKLEKSAQDR (66 aa). Residues 110–182 are disordered; that stretch reads KQSRSATVGP…SDTVHPEPPV (73 aa). Positions 115 to 233 are MTBD; the sequence is ATVGPSRPAS…ERLLDEVLDN (119 aa). A compositionally biased stretch (basic and acidic residues) spans 137 to 163; sequence APEKKNAAKAKENDENRHVCSRGDRCG. Positions 275–294 form an intramembrane region, helical; it reads ILLFGPPGNGKTLLAKAVAG. 279 to 286 is an ATP binding site; that stretch reads GPPGNGKT. Residues 295-512 are Cytoplasmic-facing; it reads ESKQMFFNIS…LSDFSRSFGC (218 aa).

Belongs to the AAA ATPase family. Spastin subfamily. As to quaternary structure, homohexamer. The homohexamer is stabilized by ATP-binding. The homohexamer may adopt a ring conformation through which microtubules pass prior to being severed. Interacts with microtubules. Interacts (via N-terminus) with tubulin; the interaction is direct.

The protein localises to the membrane. Its subcellular location is the cytoplasm. The protein resides in the cytoskeleton. It localises to the perinuclear region. It carries out the reaction n ATP + n H2O + a microtubule = n ADP + n phosphate + (n+1) alpha/beta tubulin heterodimers.. Its function is as follows. ATP-dependent microtubule severing protein that specifically recognizes and cuts microtubules. Probably by regulating microtubule remodeling, plays a role in new synapse formation in GABAergic DD (Dorsal D type) neurons. The sequence is that of Spastin homolog from Caenorhabditis elegans.